The sequence spans 299 residues: MTATEKTELAKAEVLIEALPYFQRYAGRTFVVKYGGHAMGDPKAAREFAEDIVLLKAVGINPVVVHGGGPQIGAMLKRLGVESTFVDGLRVTDKATAEVAEMVLSGAINKELVGWIAQAGGKAMGVSGKDGSLVTATKLERTTRDPESQIEQILDLGFVGEPTHVDTTILDTAVSAGMIPVVAPIGAGEDGHTYNINADTMAGAIAAALGAARLFLLTAVKGVLDKQGGLLTDLTPAQIAKLKDDGTISGGMIPKLDTCVHAVEAGCEAAVVLDGRVPHAMLLEFFTARGAGTLIRADD.

Residues 68 to 69 (GG), Arg90, and Asn195 contribute to the substrate site.

Belongs to the acetylglutamate kinase family. ArgB subfamily.

Its subcellular location is the cytoplasm. It catalyses the reaction N-acetyl-L-glutamate + ATP = N-acetyl-L-glutamyl 5-phosphate + ADP. It functions in the pathway amino-acid biosynthesis; L-arginine biosynthesis; N(2)-acetyl-L-ornithine from L-glutamate: step 2/4. Its function is as follows. Catalyzes the ATP-dependent phosphorylation of N-acetyl-L-glutamate. This chain is Acetylglutamate kinase, found in Erythrobacter litoralis (strain HTCC2594).